We begin with the raw amino-acid sequence, 477 residues long: UDP-N-acetylmuramate--L-alanine ligase (477 aa).

An ATP-binding site is contributed by 122–128 (GTHGKTT).

Belongs to the MurCDEF family.

It is found in the cytoplasm. The enzyme catalyses UDP-N-acetyl-alpha-D-muramate + L-alanine + ATP = UDP-N-acetyl-alpha-D-muramoyl-L-alanine + ADP + phosphate + H(+). Its pathway is cell wall biogenesis; peptidoglycan biosynthesis. Functionally, cell wall formation. In Xanthomonas axonopodis pv. citri (strain 306), this protein is UDP-N-acetylmuramate--L-alanine ligase.